A 436-amino-acid chain; its full sequence is GTPase Der (436 aa).

EngA-type G domains follow at residues 4 to 167 (PVVA…KDEE) and 176 to 351 (IKLS…ENHK). Residues 10-17 (GRPNVGKS), 57-61 (DTGGI), 119-122 (NKVD), 182-189 (GRPNVGKS), 229-233 (DTAGM), and 294-297 (NKWD) contribute to the GTP site. A KH-like domain is found at 352 to 436 (KRVQSSTLNE…PIRIIPRKRN (85 aa)).

The protein belongs to the TRAFAC class TrmE-Era-EngA-EngB-Septin-like GTPase superfamily. EngA (Der) GTPase family. Associates with the 50S ribosomal subunit.

Its function is as follows. GTPase that plays an essential role in the late steps of ribosome biogenesis. This Staphylococcus carnosus (strain TM300) protein is GTPase Der.